The chain runs to 738 residues: MRLLSVTFWLLLSLRTVVCVMEVQWCTISDAEQQKCKDMSEAFQGAGIRPSLLCVQGNSADHCVQLIKEQKADAITLDGGAIYEAGKEHGLKPVVGEVYDQDIGTSYYAVAVVRRNSNVTINTLKGVKSCHTGINRTVGWNVPVGYLVESGHLSVMGCDVLKAVGDYFGGSCVPGTGETSHSESLCRLCRGDSSGHNVCDKSPLERYYDYSGAFRCLAEGAGDVAFVKHSTVLENTDGNTLPSWGKSLMSEDFQLLCRDGSRADITEWRRCHLAKVPAHAVVVRGDMDGGLIFQLLNEGQLLFSHEDSSFQMFSSKAYSQKNLLFKDSTLELVPIATQNYEAWLGQEYLQAMKGLLCDPNRLPHYLRWCVLSAPEIQKCGDMAVAFSRQNLKPEIQCVSAESPEHCMEQIQAGHTDAVTLRGEDIYRAGKVYGLVPAAGELYAEEDRSNSYFVVAVARRDSSYSFTLDELRGKRSCHPYLGSPAGWEVPIGSLIQRGFIRPKDCDVLTAVSQFFNASCVPVNNPKNYPSALCALCVGDEKGRNKCVGSSQERYYGYSGAFRCLVEHAGDVAFVKHTTVFENTNGHNPEPWASHLRWQDYELLCPNGARAEVDQFQACNLAQMPSHAVMVRPDTNIFTVYGLLDKAQDLFGDDHNKNGFQMFDSSKYHSQDLLFKDATVRAVPVREKTTYLDWLGPDYVVALEGMLSQQCSGAGAAVQRVPLLALLLLTLAAGLLPRVL.

Residues 1–19 (MRLLSVTFWLLLSLRTVVC) form the signal peptide. Transferrin-like domains are found at residues 23–357 (VQWC…GLLC) and 366–706 (LRWC…GMLS). Intrachain disulfides connect cysteine 26/cysteine 63 and cysteine 36/cysteine 54. Aspartate 78 and tyrosine 107 together coordinate Fe(3+). A glycan (N-linked (GlcNAc...) asparagine) is linked at asparagine 118. Disulfide bonds link cysteine 130/cysteine 216, cysteine 172/cysteine 189, cysteine 186/cysteine 199, and cysteine 257/cysteine 271. Hydrogencarbonate is bound at residue threonine 132. Asparagine 135 is a glycosylation site (N-linked (GlcNAc...) asparagine). The hydrogencarbonate site is built by arginine 136, valine 138, and glycine 139. Tyrosine 210 is a binding site for Fe(3+). Histidine 279 and tyrosine 451 together coordinate Fe(3+). Serine 462 is modified (phosphoserine). Asparagine 515 carries N-linked (GlcNAc...) asparagine glycosylation. Tyrosine 556 and histidine 625 together coordinate Fe(3+). Cysteine 709 carries GPI-anchor amidated cysteine lipidation. The propeptide at 710–738 (SGAGAAVQRVPLLALLLLTLAAGLLPRVL) is removed in mature form.

It belongs to the transferrin family.

The protein localises to the cell membrane. Involved in iron cellular uptake. Seems to be internalized and then recycled back to the cell membrane. Binds a single atom of iron per subunit. Could also bind zinc. The sequence is that of Melanotransferrin (Meltf) from Mus musculus (Mouse).